Reading from the N-terminus, the 470-residue chain is E3 ubiquitin-protein ligase TRAIP (470 aa).

An RING-type; atypical zinc finger spans residues 7–50; the sequence is CTICSDFFDHSRDVAAIHCGHTFHLQCLIQWFETAPSRTCPQCR. Residues 76–277 adopt a coiled-coil conformation; that stretch reads AEFLKNELDS…RKKLMILQGT (202 aa). The tract at residues 211 to 470 is interaction with CYLD; that stretch reads LKEARKATGE…QPKLDTFLCQ (260 aa). A PIP-box motif is present at residues 461 to 470; the sequence is QPKLDTFLCQ.

Belongs to the TRAIP family. Interacts (via PIP-box) with PCNA. Binds TRAF1, TRAF2, TRAF3, TRAF5 and TRAF6 is part of the receptor-TRAF signaling complex. May interact with CYLD; the C-terminus interacts with CYLD, however the interaction was not detected with the full-length protein. Interacts with POLK and POLN. Interacts with UIMC1. In terms of processing, autoubiquitinated. Post-translationally, sumoylated; sumoylation is required for nuclear localization. Sumoylation increases protein stability, possibly by preventing ubiquitination. As to expression, detected in testis and thymus, and at lower levels in spleen.

It is found in the nucleus. Its subcellular location is the nucleoplasm. It localises to the nucleolus. The protein localises to the chromosome. The protein resides in the cytoplasm. It is found in the perinuclear region. The enzyme catalyses S-ubiquitinyl-[E2 ubiquitin-conjugating enzyme]-L-cysteine + [acceptor protein]-L-lysine = [E2 ubiquitin-conjugating enzyme]-L-cysteine + N(6)-ubiquitinyl-[acceptor protein]-L-lysine.. It participates in protein modification; protein ubiquitination. E3 ubiquitin ligase required to protect genome stability in response to replication stress. Acts as a key regulator of interstrand cross-link repair, which takes place when both strands of duplex DNA are covalently tethered together, thereby blocking replication and transcription. During mitosis, controls the choice between the two pathways of replication-coupled interstrand-cross-link repair by mediating ubiquitination of MCM7 subunit of the CMG helicase complex. Short ubiquitin chains on MCM7 promote recruitment of DNA glycosylase NEIL3. If the interstrand cross-link cannot be cleaved by NEIL3, the ubiquitin chains continue to grow on MCM7, promoting the unloading of the CMG helicase complex by the VCP/p97 ATPase, enabling the Fanconi anemia DNA repair pathway. Only catalyzes ubiquitination of MCM7 when forks converge. Also involved in the repair of covalent DNA-protein cross-links (DPCs) during DNA synthesis: promotes ubiquitination of DPCs, leading to their degradation by the proteasome. Has also been proposed to play a role in promoting translesion synthesis by mediating the assembly of 'Lys-63'-linked poly-ubiquitin chains on the Y-family polymerase POLN in order to facilitate bypass of DNA lesions and preserve genomic integrity. The function in translesion synthesis is however controversial. Acts as a regulator of the spindle assembly checkpoint. Also acts as a negative regulator of innate immune signaling by inhibiting activation of NF-kappa-B mediated by TNF. Negatively regulates TLR3/4- and RIG-I-mediated IRF3 activation and subsequent IFNB1 production and cellular antiviral response by promoting 'Lys-48'-linked polyubiquitination of TNK1 leading to its proteasomal degradation. This Mus musculus (Mouse) protein is E3 ubiquitin-protein ligase TRAIP.